The chain runs to 427 residues: Dihydroorotase (427 aa).

Zn(2+) is bound by residues H60 and H62. Residues 62–64 (HLR) and N94 each bind substrate. Zn(2+) is bound by residues D152, H179, and H232. A substrate-binding site is contributed by N278. D305 contributes to the Zn(2+) binding site. D305 is a catalytic residue. Residues H309 and 323–324 (FG) contribute to the substrate site.

It belongs to the metallo-dependent hydrolases superfamily. DHOase family. Class I DHOase subfamily. Zn(2+) is required as a cofactor.

It carries out the reaction (S)-dihydroorotate + H2O = N-carbamoyl-L-aspartate + H(+). Its pathway is pyrimidine metabolism; UMP biosynthesis via de novo pathway; (S)-dihydroorotate from bicarbonate: step 3/3. Its function is as follows. Catalyzes the reversible cyclization of carbamoyl aspartate to dihydroorotate. The chain is Dihydroorotase from Bacillus caldolyticus.